Consider the following 476-residue polypeptide: Serine--tRNA ligase (476 aa).

279–281 (TAE) contributes to the L-serine binding site. 310-312 (RAE) provides a ligand contact to ATP. Residue glutamate 333 participates in L-serine binding. 400–403 (EISS) is a binding site for ATP. Serine 435 provides a ligand contact to L-serine.

This sequence belongs to the class-II aminoacyl-tRNA synthetase family. Type-1 seryl-tRNA synthetase subfamily. Homodimer. The tRNA molecule binds across the dimer.

The protein resides in the cytoplasm. The catalysed reaction is tRNA(Ser) + L-serine + ATP = L-seryl-tRNA(Ser) + AMP + diphosphate + H(+). The enzyme catalyses tRNA(Sec) + L-serine + ATP = L-seryl-tRNA(Sec) + AMP + diphosphate + H(+). Its pathway is aminoacyl-tRNA biosynthesis; selenocysteinyl-tRNA(Sec) biosynthesis; L-seryl-tRNA(Sec) from L-serine and tRNA(Sec): step 1/1. Its function is as follows. Catalyzes the attachment of serine to tRNA(Ser). Is also able to aminoacylate tRNA(Sec) with serine, to form the misacylated tRNA L-seryl-tRNA(Sec), which will be further converted into selenocysteinyl-tRNA(Sec). This is Serine--tRNA ligase from Rhodopseudomonas palustris (strain BisA53).